A 638-amino-acid polypeptide reads, in one-letter code: MTEKTIRLTTAQALVKFLNQQYIEVDGESAPFVDGIFTLFGHGNVVGIGQALEENPGHLKVYQGKNEQGMAHAAIAYAKQKNRKRIYACSTSAGPGSANLITAAGTAFANNLPVLFLPADTFATRQPDPVLQQLEHESSTAITTNDGFQAVSKYFDRVQRPEQLMSALIRAFEVMTNPVSAGPATICIAQDTEGEAFDYPVTFFQKRIHYLNRQIPTKRELTEAAKLIKASQTPVIIVGGGARYSDARKELIALSEQNDIPLVETHAGKSTVEFSFKNNLGGTGILGTLAANKIIHEADLVIGIGTRYTDFTTSSKTAFNPATKFININVSRMQTYKLDAFQVVGDAKATLIELTPLLKGYKTQFGDKISTYKKEWLKERTRLQHTKFNRDNFAPEIKNQFDQTTLNEYADSLQTEFTQTEALITINDTVAPDSIVVCSAGSLPGDLQRLWNPAVPNTYHLEYGYSCMGYEINGALGAKMAASDNQEVYSIVGDGSFCMSHSELLTSLQYGKKINIMLFDNSGFGCINNLQMANGSDSFFCEFRDNNNQIMQVDYAKIAEGYGAKVYKANTKEDLVNALEDAKKQTKTTLIDMKVLPKTMSEGYLNWWNVGVSEVSNKESITRAYEAKQINLKKARLY.

Glutamate 67 lines the thiamine diphosphate pocket. Residues 442-523 are thiamine pyrophosphate binding; that stretch reads SLPGDLQRLW…INIMLFDNSG (82 aa). Positions 494 and 521 each coordinate Mg(2+).

Belongs to the TPP enzyme family. Mg(2+) is required as a cofactor. The cofactor is thiamine diphosphate.

The catalysed reaction is 3D-3,5/4-trihydroxycyclohexane-1,2-dione + H2O = 5-deoxy-D-glucuronate + H(+). Its pathway is polyol metabolism; myo-inositol degradation into acetyl-CoA; acetyl-CoA from myo-inositol: step 3/7. Involved in the cleavage of the C1-C2 bond of 3D-(3,5/4)-trihydroxycyclohexane-1,2-dione (THcHDO) to yield 5-deoxy-glucuronate (5DG). This is 3D-(3,5/4)-trihydroxycyclohexane-1,2-dione hydrolase from Listeria innocua serovar 6a (strain ATCC BAA-680 / CLIP 11262).